The sequence spans 67 residues: DNA-directed RNA polymerases I, II, and III subunit RPABC5 (67 aa).

Zn(2+)-binding residues include Cys7, Cys10, Cys44, and Cys45.

Belongs to the archaeal Rpo10/eukaryotic RPB10 RNA polymerase subunit family. In terms of assembly, component of the RNA polymerase I (Pol I), RNA polymerase II (Pol II) and RNA polymerase III (Pol III) complexes consisting of at least 13, 12 and 17 subunits, respectively.

The protein localises to the nucleus. Its function is as follows. DNA-dependent RNA polymerase catalyzes the transcription of DNA into RNA using the four ribonucleoside triphosphates as substrates. Common component of RNA polymerases I, II and III which synthesize ribosomal RNA precursors, mRNA precursors and many functional non-coding RNAs, and a small RNAs, such as 5S rRNA and tRNAs, respectively. Pol II is the central component of the basal RNA polymerase II transcription machinery. Pols are composed of mobile elements that move relative to each other. In Pol II, Polr2L is part of the core element with the central large cleft. The chain is DNA-directed RNA polymerases I, II, and III subunit RPABC5 from Drosophila melanogaster (Fruit fly).